Consider the following 509-residue polypeptide: Transcription factor atf-7 (509 aa).

Over residues 283–303 (TVSSYHSPLGASSQPPSTQKS) the composition is skewed to polar residues. Disordered stretches follow at residues 283 to 318 (TVSSYHSPLGASSQPPSTQKSPADGSWDHINGEKQI) and 337 to 400 (NMSS…ILER). Residues 308-318 (SWDHINGEKQI) are compositionally biased toward basic and acidic residues. Residues 337–364 (NMSSSGSDQDQSADMSNAGSTASTSTGN) are compositionally biased toward low complexity. Basic and acidic residues predominate over residues 390 to 400 (PDERRNTILER). Residues 391–464 (DERRNTILER…TERESRCVCL (74 aa)) form the bZIP domain. A basic motif region spans residues 393–413 (RRNTILERNKAAAVRYRKRKK). Residues 419 to 450 (MMGRVQAMEAEKNQLLAIQTQNQVLRRELERV) form a leucine-zipper region.

The protein belongs to the bZIP family. In terms of assembly, interacts with serine/threonine kinase pmk-1; perhaps in a manner dependent on dual specificity protein kinase sek-1. Expressed in intestinal cells.

It localises to the nucleus. The protein localises to the chromosome. In terms of biological role, transcription factor which regulates the transcription of various genes, including those involved in innate immunity and oxidative stress responses. Binds to promoter regions of genes, probably at 5'-[GACGTCA]-3' consensus sequences. Together with transcription factor daf-19, involved in regulation of the serotonergic response of ADF neurons to pathogenic food. Modulates response to infection by the Gram-negative bacterium P.aeruginosa, acting downstream of the p38 signal transduction pathway effector serine/threonine kinase pmk-1. May act with transcription factor elt-2 to control p38 gene induction in response to bacterial infection. May be phosphorylated by pmk-1. Regulates transcription of the metallothionein gene, mtl-1, perhaps acting downstream of pmk-1. This is Transcription factor atf-7 from Caenorhabditis elegans.